A 353-amino-acid polypeptide reads, in one-letter code: Putative actin-28 (353 aa).

This sequence belongs to the actin family.

The protein localises to the cytoplasm. Its subcellular location is the cytoskeleton. The enzyme catalyses ATP + H2O = ADP + phosphate + H(+). Its function is as follows. Actins are highly conserved proteins that are involved in various types of cell motility and are ubiquitously expressed in all eukaryotic cells. Multiple isoforms are involved in various cellular functions such as cytoskeleton structure, cell mobility, chromosome movement and muscle contraction. The protein is Putative actin-28 (act28) of Dictyostelium discoideum (Social amoeba).